The following is a 456-amino-acid chain: Carnosine N-methyltransferase unmet (456 aa).

Residues arginine 154, glycine 195, glutamate 216, aspartate 282, phenylalanine 283, and cysteine 299 each contribute to the S-adenosyl-L-methionine site. The carnosine site is built by aspartate 303, histidine 334, and tyrosine 385. Basic and acidic residues predominate over residues 402–418 (RGKRKASREPHDLIVRE). The interval 402-456 (RGKRKASREPHDLIVREDSEEEGEQQPERNETEEKQQLKPLATANCETEIKEQPS) is disordered. Phosphoserine occurs at positions 408 and 420. Positions 427-438 (QPERNETEEKQQ) are enriched in basic and acidic residues.

Belongs to the carnosine N-methyltransferase family. As to quaternary structure, associates with the GATOR2 complex; the interaction is probably direct and is inhibited by S-adenosyl-L-methionine binding. Associates with the GATOR1 complex; the interaction is probably indirect and mediated by the GATOR2 complex.

The enzyme catalyses carnosine + S-adenosyl-L-methionine = anserine + S-adenosyl-L-homocysteine + H(+). Functionally, S-adenosyl-L-methionine-binding protein that acts as a sensor to signal methionine availability to the mTORC1 signaling pathway. Associates with the GATOR2 complex in the absence of methionine to inhibit mTORC1 signaling, but dissociates in the presence of the methionine derivative S-adenosyl-L-methionine; S-adenosyl-L-homocysteine binding does not induce dissociation. Required for mTORC1 pathway response to methionine starvation. Exerts a protective function on developing egg chambers by inhibiting mTORC1 signaling under starvation conditions. May also function as a N-methyltransferase that mediates the formation of anserine (beta-alanyl-N(Pi)-methyl-L-histidine) from carnosine. It is unclear whether this protein has retained N-methyltransferase activity or if it is an evolutionary intermediate whose substrate binding ability has been co-opted to function as a nutrient sensor for mTORC1 signaling. In Drosophila melanogaster (Fruit fly), this protein is Carnosine N-methyltransferase unmet.